A 360-amino-acid chain; its full sequence is UDP-N-acetylglucosamine--N-acetylmuramyl-(pentapeptide) pyrophosphoryl-undecaprenol N-acetylglucosamine transferase (360 aa).

UDP-N-acetyl-alpha-D-glucosamine is bound by residues 12–14, Ser198, and Gln289; that span reads TAG.

This sequence belongs to the glycosyltransferase 28 family. MurG subfamily.

Its subcellular location is the cell membrane. It carries out the reaction Mur2Ac(oyl-L-Ala-gamma-D-Glu-L-Lys-D-Ala-D-Ala)-di-trans,octa-cis-undecaprenyl diphosphate + UDP-N-acetyl-alpha-D-glucosamine = beta-D-GlcNAc-(1-&gt;4)-Mur2Ac(oyl-L-Ala-gamma-D-Glu-L-Lys-D-Ala-D-Ala)-di-trans,octa-cis-undecaprenyl diphosphate + UDP + H(+). It participates in cell wall biogenesis; peptidoglycan biosynthesis. Functionally, cell wall formation. Catalyzes the transfer of a GlcNAc subunit on undecaprenyl-pyrophosphoryl-MurNAc-pentapeptide (lipid intermediate I) to form undecaprenyl-pyrophosphoryl-MurNAc-(pentapeptide)GlcNAc (lipid intermediate II). The chain is UDP-N-acetylglucosamine--N-acetylmuramyl-(pentapeptide) pyrophosphoryl-undecaprenol N-acetylglucosamine transferase from Streptococcus equi subsp. zooepidemicus (strain MGCS10565).